Consider the following 109-residue polypeptide: Small ribosomal subunit protein bS6 (109 aa).

This sequence belongs to the bacterial ribosomal protein bS6 family.

In terms of biological role, binds together with bS18 to 16S ribosomal RNA. This chain is Small ribosomal subunit protein bS6, found in Anaplasma marginale (strain St. Maries).